The following is a 342-amino-acid chain: Farnesyl pyrophosphate synthase 1 (342 aa).

Residues lysine 48, arginine 51, and glutamine 86 each coordinate isopentenyl diphosphate. Aspartate 93 and aspartate 97 together coordinate Mg(2+). Residue arginine 102 participates in dimethylallyl diphosphate binding. An isopentenyl diphosphate-binding site is contributed by arginine 103. The dimethylallyl diphosphate site is built by lysine 190, threonine 191, glutamine 229, lysine 246, and lysine 255.

This sequence belongs to the FPP/GGPP synthase family. It depends on Mg(2+) as a cofactor.

The protein localises to the cytoplasm. The enzyme catalyses isopentenyl diphosphate + dimethylallyl diphosphate = (2E)-geranyl diphosphate + diphosphate. It carries out the reaction isopentenyl diphosphate + (2E)-geranyl diphosphate = (2E,6E)-farnesyl diphosphate + diphosphate. Its pathway is isoprenoid biosynthesis; farnesyl diphosphate biosynthesis; farnesyl diphosphate from geranyl diphosphate and isopentenyl diphosphate: step 1/1. It participates in isoprenoid biosynthesis; geranyl diphosphate biosynthesis; geranyl diphosphate from dimethylallyl diphosphate and isopentenyl diphosphate: step 1/1. In terms of biological role, catalyzes the sequential condensation of isopentenyl pyrophosphate with the allylic pyrophosphates, dimethylallyl pyrophosphate, and then with the resultant geranylpyrophosphate to the ultimate product farnesyl pyrophosphate. The polypeptide is Farnesyl pyrophosphate synthase 1 (FPS1) (Parthenium argentatum (Guayule rubber plant)).